A 260-amino-acid chain; its full sequence is Adenosylcobinamide-GDP ribazoletransferase (260 aa).

The next 6 helical transmembrane spans lie at 40–60, 64–84, 117–137, 142–162, 189–209, and 210–230; these read AFPF…LLLL, ADPL…TGAL, YGAI…AAIV, PLAA…AITW, FALV…FGLW, and PLVA…VFIR.

This sequence belongs to the CobS family. It depends on Mg(2+) as a cofactor.

It localises to the cell inner membrane. The catalysed reaction is alpha-ribazole + adenosylcob(III)inamide-GDP = adenosylcob(III)alamin + GMP + H(+). The enzyme catalyses alpha-ribazole 5'-phosphate + adenosylcob(III)inamide-GDP = adenosylcob(III)alamin 5'-phosphate + GMP + H(+). It functions in the pathway cofactor biosynthesis; adenosylcobalamin biosynthesis; adenosylcobalamin from cob(II)yrinate a,c-diamide: step 7/7. Joins adenosylcobinamide-GDP and alpha-ribazole to generate adenosylcobalamin (Ado-cobalamin). Also synthesizes adenosylcobalamin 5'-phosphate from adenosylcobinamide-GDP and alpha-ribazole 5'-phosphate. This chain is Adenosylcobinamide-GDP ribazoletransferase, found in Rhizobium etli (strain CIAT 652).